A 347-amino-acid polypeptide reads, in one-letter code: Probable dual-specificity RNA methyltransferase RlmN (347 aa).

Glu-90 acts as the Proton acceptor in catalysis. One can recognise a Radical SAM core domain in the interval 96–326; it reads YKHGNSICIS…VTVRREMGSD (231 aa). Cys-103 and Cys-331 are oxidised to a cystine. Residues Cys-110, Cys-114, and Cys-117 each contribute to the [4Fe-4S] cluster site. S-adenosyl-L-methionine-binding positions include 157 to 158, Ser-189, 212 to 214, and Asn-288; these read GE and SLH. Cys-331 functions as the S-methylcysteine intermediate in the catalytic mechanism.

Belongs to the radical SAM superfamily. RlmN family. [4Fe-4S] cluster serves as cofactor.

Its subcellular location is the cytoplasm. The enzyme catalyses adenosine(2503) in 23S rRNA + 2 reduced [2Fe-2S]-[ferredoxin] + 2 S-adenosyl-L-methionine = 2-methyladenosine(2503) in 23S rRNA + 5'-deoxyadenosine + L-methionine + 2 oxidized [2Fe-2S]-[ferredoxin] + S-adenosyl-L-homocysteine. It carries out the reaction adenosine(37) in tRNA + 2 reduced [2Fe-2S]-[ferredoxin] + 2 S-adenosyl-L-methionine = 2-methyladenosine(37) in tRNA + 5'-deoxyadenosine + L-methionine + 2 oxidized [2Fe-2S]-[ferredoxin] + S-adenosyl-L-homocysteine. Functionally, specifically methylates position 2 of adenine 2503 in 23S rRNA and position 2 of adenine 37 in tRNAs. This chain is Probable dual-specificity RNA methyltransferase RlmN, found in Clostridium botulinum (strain Alaska E43 / Type E3).